A 129-amino-acid chain; its full sequence is Glycine cleavage system H protein (129 aa).

The region spanning 24-106 (VFTVGISEHA…YGDGWLFKIK (83 aa)) is the Lipoyl-binding domain. Lys65 bears the N6-lipoyllysine mark.

The protein belongs to the GcvH family. In terms of assembly, the glycine cleavage system is composed of four proteins: P, T, L and H. Requires (R)-lipoate as cofactor.

Functionally, the glycine cleavage system catalyzes the degradation of glycine. The H protein shuttles the methylamine group of glycine from the P protein to the T protein. This chain is Glycine cleavage system H protein, found in Alteromonas mediterranea (strain DSM 17117 / CIP 110805 / LMG 28347 / Deep ecotype).